Here is a 220-residue protein sequence, read N- to C-terminus: Probable GTP-binding protein EngB (220 aa).

The 175-residue stretch at 26-200 folds into the EngB-type G domain; that stretch reads EGIEIAFAGR…RAKLDEWYAP (175 aa). GTP-binding positions include 34-41, 61-65, 79-82, 146-149, and 179-181; these read GRSNAGKS, GRTQL, DLPG, TKAD, and FSS. Mg(2+) contacts are provided by Ser-41 and Thr-63.

This sequence belongs to the TRAFAC class TrmE-Era-EngA-EngB-Septin-like GTPase superfamily. EngB GTPase family. Requires Mg(2+) as cofactor.

Necessary for normal cell division and for the maintenance of normal septation. In Vibrio cholerae serotype O1 (strain ATCC 39315 / El Tor Inaba N16961), this protein is Probable GTP-binding protein EngB.